Here is a 428-residue protein sequence, read N- to C-terminus: Dihydroorotase (428 aa).

Zn(2+)-binding residues include His61 and His63. Substrate contacts are provided by residues 63-65 (HLR) and Asn95. Residues Asp153, His180, and His233 each coordinate Zn(2+). Asn279 contacts substrate. Asp306 contacts Zn(2+). Asp306 is a catalytic residue. Residues His310 and 324-325 (FG) contribute to the substrate site.

The protein belongs to the metallo-dependent hydrolases superfamily. DHOase family. Class I DHOase subfamily. Zn(2+) is required as a cofactor.

It carries out the reaction (S)-dihydroorotate + H2O = N-carbamoyl-L-aspartate + H(+). The protein operates within pyrimidine metabolism; UMP biosynthesis via de novo pathway; (S)-dihydroorotate from bicarbonate: step 3/3. Catalyzes the reversible cyclization of carbamoyl aspartate to dihydroorotate. The polypeptide is Dihydroorotase (Geobacillus kaustophilus (strain HTA426)).